We begin with the raw amino-acid sequence, 214 residues long: ATP-dependent Clp protease proteolytic subunit (214 aa).

Serine 110 functions as the Nucleophile in the catalytic mechanism. The active site involves histidine 135.

It belongs to the peptidase S14 family. Fourteen ClpP subunits assemble into 2 heptameric rings which stack back to back to give a disk-like structure with a central cavity, resembling the structure of eukaryotic proteasomes.

It is found in the cytoplasm. The enzyme catalyses Hydrolysis of proteins to small peptides in the presence of ATP and magnesium. alpha-casein is the usual test substrate. In the absence of ATP, only oligopeptides shorter than five residues are hydrolyzed (such as succinyl-Leu-Tyr-|-NHMec, and Leu-Tyr-Leu-|-Tyr-Trp, in which cleavage of the -Tyr-|-Leu- and -Tyr-|-Trp bonds also occurs).. Cleaves peptides in various proteins in a process that requires ATP hydrolysis. Has a chymotrypsin-like activity. Plays a major role in the degradation of misfolded proteins. The sequence is that of ATP-dependent Clp protease proteolytic subunit from Legionella pneumophila (strain Paris).